We begin with the raw amino-acid sequence, 192 residues long: Ion-translocating oxidoreductase complex subunit A (192 aa).

6 helical membrane passes run 5-25, 38-58, 72-92, 102-122, 134-154, and 171-191; these read LLLL…FLGL, AIGM…LSFL, LRTM…EMLV, ALGI…VALL, AIYG…FSAM, and AIAM…AGLI.

This sequence belongs to the NqrDE/RnfAE family. As to quaternary structure, the complex is composed of six subunits: RnfA, RnfB, RnfC, RnfD, RnfE and RnfG.

The protein localises to the cell inner membrane. In terms of biological role, part of a membrane-bound complex that couples electron transfer with translocation of ions across the membrane. This is Ion-translocating oxidoreductase complex subunit A from Shewanella denitrificans (strain OS217 / ATCC BAA-1090 / DSM 15013).